Consider the following 796-residue polypeptide: DnaJ homolog subfamily C member 10 (796 aa).

The N-terminal stretch at 1–33 is a signal peptide; the sequence is MKHSLNTATSSSSVLKRTILYLVLISLAALVYC. Residues 36-100 enclose the J domain; the sequence is DYYDLLGVSK…DLRKKYDKYG (65 aa). The region spanning 131-233 is the Thioredoxin 1 domain; sequence EIITLDRGEF…ERLVNFAMPY (103 aa). The cysteines at positions 159 and 162 are disulfide-linked. 2 trxb regions span residues 236–351 and 349–464; these read STVT…LPDL and PDLE…PTNF. 3 consecutive Thioredoxin domains span residues 455–554, 558–668, and 672–780; these read HVIT…IEDL, SVVT…ALMY, and ASFD…ITKR. An intrachain disulfide couples Cys481 to Cys484. The N-linked (GlcNAc...) asparagine glycan is linked to Asn531. Disulfide bonds link Cys589-Cys592 and Cys701-Cys704. Asn753 carries N-linked (GlcNAc...) asparagine glycosylation. The Prevents secretion from ER signature appears at 793-796; it reads KDEL.

The protein localises to the endoplasmic reticulum lumen. Its function is as follows. Endoplasmic reticulum disulfide reductase involved both in the correct folding of proteins and degradation of misfolded proteins. Required for efficient folding of proteins in the endoplasmic reticulum by catalyzing the removal of non-native disulfide bonds formed during the folding of proteins. Also involved in endoplasmic reticulum-associated degradation (ERAD) by reducing incorrect disulfide bonds in misfolded glycoproteins. This is DnaJ homolog subfamily C member 10 (dnajc10) from Xenopus laevis (African clawed frog).